The chain runs to 508 residues: DEAD-box ATP-dependent RNA helicase 8 (508 aa).

The disordered stretch occupies residues Met1–Tyr123. The span at Asn18–Pro53 shows a compositional bias: low complexity. Over residues Gln54–Gln64 the composition is skewed to basic residues. A Q motif motif is present at residues Asn134–Glu162. One can recognise a Helicase ATP-binding domain in the interval Ile165–Ile335. ATP is bound at residue Ala178 to Thr185. The short motif at Asp283–Asp286 is the DEAD box element. Residues Gly345–Ile505 enclose the Helicase C-terminal domain.

The protein belongs to the DEAD box helicase family. DDX6/DHH1 subfamily.

Its subcellular location is the cytoplasm. It is found in the P-body. It catalyses the reaction ATP + H2O = ADP + phosphate + H(+). In terms of biological role, ATP-dependent RNA helicase involved in mRNA turnover, and more specifically in mRNA decapping. The polypeptide is DEAD-box ATP-dependent RNA helicase 8 (Oryza sativa subsp. japonica (Rice)).